We begin with the raw amino-acid sequence, 248 residues long: Putative mutator protein MutT4 (248 aa).

Residues 1 to 64 (MSDGEQAKSR…GSTRMRTVHE (64 aa)) are disordered. Residues 9-20 (SRRRRGRRRGRR) are compositionally biased toward basic residues. The segment covering 31–44 (AQPAGDATPTPATA) has biased composition (low complexity). The span at 45–57 (KRSRSRSPRRGST) shows a compositional bias: basic residues. One can recognise a Nudix hydrolase domain in the interval 62–198 (VHETSAGGLV…DERRLAEVAD (137 aa)). Residues glycine 103, glutamate 118, glutamate 121, and glutamate 122 each coordinate Mg(2+). The short motif at 103–124 (GHIELGETAEQTAIREVAEETG) is the Nudix box element. A disordered region spans residues 204 to 248 (LQSDGPAALPPLPPSSPRRRPQTHSRARHADDSAPGQHNGPGPGP). Basic residues predominate over residues 220 to 230 (PRRRPQTHSRA).

The protein belongs to the Nudix hydrolase family. Mg(2+) serves as cofactor. Requires Mn(2+) as cofactor.

Functionally, may be involved in the GO system responsible for removing an oxidatively damaged form of guanine (7,8-dihydro-8-oxoguanine, 8-oxo-dGTP) from DNA and the nucleotide pool. In Mycobacterium tuberculosis (strain CDC 1551 / Oshkosh), this protein is Putative mutator protein MutT4 (mutT4).